A 514-amino-acid polypeptide reads, in one-letter code: Proline--tRNA ligase (514 aa).

This sequence belongs to the class-II aminoacyl-tRNA synthetase family. ProS type 3 subfamily. In terms of assembly, homodimer.

It is found in the cytoplasm. The catalysed reaction is tRNA(Pro) + L-proline + ATP = L-prolyl-tRNA(Pro) + AMP + diphosphate. Catalyzes the attachment of proline to tRNA(Pro) in a two-step reaction: proline is first activated by ATP to form Pro-AMP and then transferred to the acceptor end of tRNA(Pro). The sequence is that of Proline--tRNA ligase from Erythrobacter litoralis (strain HTCC2594).